Consider the following 305-residue polypeptide: MAGRLVLGTRGSPLALAQAEACAAGLRAAGFAVELRRIRTTSDRRPDDPLSVIDQRDVFTRQLDEALLAGEVDLAVHSMKDVPTEVPEGIVLAAVAGRADPSDALVSEGGWGVDGLPEGARVATSSLRRRAQLLHRRPDLRVVEIRGNVDTRIRKMRAGAAEAVVLARAGLVRLGLEVPHAVIPHDVLLPAVGQGALAVAVRRGDPRLEEIRRALNDPAAEREVAAERALLRALEGGCRVPVGARAVAGGRGVLLRGVVVSPDGAALCGGEERGEEPEEVGRRLAARLLERGAAGILGFVRGVKP.

S-(dipyrrolylmethanemethyl)cysteine is present on cysteine 238.

This sequence belongs to the HMBS family. In terms of assembly, monomer. It depends on dipyrromethane as a cofactor.

The enzyme catalyses 4 porphobilinogen + H2O = hydroxymethylbilane + 4 NH4(+). Its pathway is porphyrin-containing compound metabolism; protoporphyrin-IX biosynthesis; coproporphyrinogen-III from 5-aminolevulinate: step 2/4. Tetrapolymerization of the monopyrrole PBG into the hydroxymethylbilane pre-uroporphyrinogen in several discrete steps. The chain is Porphobilinogen deaminase from Rubrobacter xylanophilus (strain DSM 9941 / JCM 11954 / NBRC 16129 / PRD-1).